Consider the following 125-residue polypeptide: Holo-[acyl-carrier-protein] synthase (125 aa).

Mg(2+) contacts are provided by aspartate 8 and glutamate 57.

This sequence belongs to the P-Pant transferase superfamily. AcpS family. The cofactor is Mg(2+).

It localises to the cytoplasm. The enzyme catalyses apo-[ACP] + CoA = holo-[ACP] + adenosine 3',5'-bisphosphate + H(+). In terms of biological role, transfers the 4'-phosphopantetheine moiety from coenzyme A to a Ser of acyl-carrier-protein. This is Holo-[acyl-carrier-protein] synthase from Neisseria meningitidis serogroup C (strain 053442).